We begin with the raw amino-acid sequence, 1396 residues long: Integrin alpha-PS2 (1396 aa).

The signal sequence occupies residues methionine 1–glycine 31. Residues tyrosine 32–valine 1341 lie on the Extracellular side of the membrane. FG-GAP repeat units follow at residues leucine 36–leucine 106, asparagine 117–histidine 174, arginine 186–lysine 239, serine 266–methionine 317, alanine 318–lysine 383, threonine 386–alanine 445, and lysine 452–asparagine 514. The N-linked (GlcNAc...) asparagine glycan is linked to asparagine 69. N-linked (GlcNAc...) asparagine glycosylation occurs at asparagine 209. Residue asparagine 322 is glycosylated (N-linked (GlcNAc...) asparagine). Asparagine 584, asparagine 598, asparagine 741, asparagine 783, asparagine 833, and asparagine 959 each carry an N-linked (GlcNAc...) asparagine glycan. 2 disordered regions span residues serine 960–leucine 1107 and proline 1159–glutamine 1246. Residues alanine 963–aspartate 979 are compositionally biased toward basic and acidic residues. Residues glutamine 997 to glutamine 1006 are compositionally biased toward polar residues. Asparagine 1005 is a glycosylation site (N-linked (GlcNAc...) asparagine). 2 stretches are compositionally biased toward low complexity: residues threonine 1007 to serine 1021 and glutamine 1060 to alanine 1071. A compositionally biased stretch (polar residues) spans valine 1082–threonine 1099. 2 stretches are compositionally biased toward low complexity: residues glutamine 1162–threonine 1182 and serine 1217–serine 1226. Asparagine 1299 and asparagine 1307 each carry an N-linked (GlcNAc...) asparagine glycan. A helical transmembrane segment spans residues valine 1342–tyrosine 1366. The Cytoplasmic portion of the chain corresponds to lysine 1367–leucine 1396. Positions threonine 1377–leucine 1396 are disordered.

Belongs to the integrin alpha chain family. As to quaternary structure, heterodimer of an alpha and a beta subunit. The alpha subunit is composed of a heavy and a light chain linked by a disulfide bond. Alpha-PS2 associates with beta-PS. The heavy-light chain cleavage site is either in 1230-1231, or 1233-1234, or 1243-1244. In terms of tissue distribution, in ovaries, highly expressed in follicle cells. At syncytial blastoderm stage, expressed in the embryonic mesodermal precursors but not in the ectoderm. At embryonic stages 7 and 10, expression is restricted to the mesoderm. At stage 12, expressed in the gonadal sheath and the interstitial cells of the gonad. In stage 16 embryos, expressed in the somatic and visceral muscles where localizes to sites of attachment between adjacent muscles. In third larval instar wing imaginal disk, expressed in the ventral compartment and in a subset of adepithelial and peripodial cells (at protein level).

It localises to the apical cell membrane. Its subcellular location is the lateral cell membrane. The protein resides in the basal cell membrane. Its function is as follows. Alpha-PS2/beta-PS is a receptor for Tig, wb and Ten-m. Involved in the function and/or development of the olfactory system. In Drosophila melanogaster (Fruit fly), this protein is Integrin alpha-PS2 (if).